Here is an 812-residue protein sequence, read N- to C-terminus: DNA translocase FtsK 1 (812 aa).

The segment covering 1-11 (MTEKSHKKTAK) has biased composition (basic residues). Residues 1–36 (MTEKSHKKTAKGRAGSPSPTSARNKKADNGARGNKV) form a disordered region. Over residues 25–36 (KKADNGARGNKV) the composition is skewed to basic and acidic residues. The next 5 membrane-spanning stretches (helical) occupy residues 63–83 (IGDALWLMGLAATLYLAISLI), 116–136 (VGYYLFGWSFWWWIAAACVVL), 156–176 (IAAAALFVLTVFSPVLEYFVL), 184–204 (LPVGAGGMVGIRVGAVFAWLL), and 210–230 (LLIILVVLLLSLSLLVQISWL). Residues 231 to 812 (EFLNGAGRAV…RKILAHKDHL (582 aa)) are Cytoplasmic-facing. In terms of domain architecture, FtsK spans 461–670 (GTPVVGDLAK…FTVQSKIDSR (210 aa)). 481–486 (GSGKSV) is an ATP binding site.

This sequence belongs to the FtsK/SpoIIIE/SftA family. In terms of assembly, homohexamer. Forms a ring that surrounds DNA.

It localises to the cell inner membrane. Its function is as follows. Essential cell division protein that coordinates cell division and chromosome segregation. The N-terminus is involved in assembly of the cell-division machinery. The C-terminus functions as a DNA motor that moves dsDNA in an ATP-dependent manner towards the dif recombination site, which is located within the replication terminus region. Translocation stops specifically at Xer-dif sites, where FtsK interacts with the Xer recombinase, allowing activation of chromosome unlinking by recombination. FtsK orienting polar sequences (KOPS) guide the direction of DNA translocation. FtsK can remove proteins from DNA as it translocates, but translocation stops specifically at XerCD-dif site, thereby preventing removal of XerC and XerD from dif. The protein is DNA translocase FtsK 1 (ftsK1) of Neisseria meningitidis serogroup B (strain ATCC BAA-335 / MC58).